Here is a 449-residue protein sequence, read N- to C-terminus: Metacaspase-1 (449 aa).

The segment at 1–132 is disordered; that stretch reads MFPGQGRHTY…YSRPPTNQQS (132 aa). Residues 10–26 show a composition bias toward low complexity; sequence YGGQQQLLQLQQYNYGP. The span at 27-55 shows a compositional bias: pro residues; that stretch reads PQGPPPNGYGPPPGPPPNGYGPPPGPPPQ. Positions 56–66 are enriched in polar residues; it reads NSWGYGNPSGT. Low complexity-rich tracts occupy residues 67 to 91 and 98 to 112; these read QSSN…YQRP and QSGN…NGEP. The segment covering 119–132 has biased composition (polar residues); that stretch reads GSGQYSRPPTNQQS. Catalysis depends on residues H232 and C293.

This sequence belongs to the peptidase C14B family.

Its function is as follows. Involved in cell death (apoptosis). The polypeptide is Metacaspase-1 (MCA1) (Lodderomyces elongisporus (strain ATCC 11503 / CBS 2605 / JCM 1781 / NBRC 1676 / NRRL YB-4239) (Yeast)).